Reading from the N-terminus, the 64-residue chain is Large ribosomal subunit protein bL35 (64 aa).

It belongs to the bacterial ribosomal protein bL35 family.

The polypeptide is Large ribosomal subunit protein bL35 (Vibrio vulnificus (strain CMCP6)).